Consider the following 582-residue polypeptide: Proline--tRNA ligase (582 aa).

It belongs to the class-II aminoacyl-tRNA synthetase family. ProS type 1 subfamily. Homodimer.

Its subcellular location is the cytoplasm. It carries out the reaction tRNA(Pro) + L-proline + ATP = L-prolyl-tRNA(Pro) + AMP + diphosphate. Catalyzes the attachment of proline to tRNA(Pro) in a two-step reaction: proline is first activated by ATP to form Pro-AMP and then transferred to the acceptor end of tRNA(Pro). As ProRS can inadvertently accommodate and process non-cognate amino acids such as alanine and cysteine, to avoid such errors it has two additional distinct editing activities against alanine. One activity is designated as 'pretransfer' editing and involves the tRNA(Pro)-independent hydrolysis of activated Ala-AMP. The other activity is designated 'posttransfer' editing and involves deacylation of mischarged Ala-tRNA(Pro). The misacylated Cys-tRNA(Pro) is not edited by ProRS. This chain is Proline--tRNA ligase, found in Mycolicibacterium paratuberculosis (strain ATCC BAA-968 / K-10) (Mycobacterium paratuberculosis).